The following is a 312-amino-acid chain: Pseudouridine-5'-phosphate glycosidase (312 aa).

The Proton donor role is filled by Glu31. Positions 93 and 113 each coordinate substrate. Asp145 provides a ligand contact to Mn(2+). Substrate is bound at residue 147–149 (SAD). Lys166 serves as the catalytic Nucleophile.

The protein belongs to the pseudouridine-5'-phosphate glycosidase family. Homotrimer. The cofactor is Mn(2+). Requires Fe(2+) as cofactor. Co(2+) is required as a cofactor.

It catalyses the reaction D-ribose 5-phosphate + uracil = psi-UMP + H2O. Its activity is regulated as follows. Inhibited by Zn(2+) and Ni(2+). In terms of biological role, catalyzes the reversible cleavage of pseudouridine 5'-phosphate (PsiMP) to ribose 5-phosphate and uracil. Functions biologically in the cleavage direction, as part of a pseudouridine degradation pathway. The chain is Pseudouridine-5'-phosphate glycosidase from Escherichia coli (strain K12).